The sequence spans 251 residues: Phosphate import ATP-binding protein PstB 2 (251 aa).

The ABC transporter domain occupies 5 to 246 (ITSKDVHLSY…PKKQITSDYL (242 aa)). ATP is bound at residue 37 to 44 (GPSGCGKS).

It belongs to the ABC transporter superfamily. Phosphate importer (TC 3.A.1.7) family. The complex is composed of two ATP-binding proteins (PstB), two transmembrane proteins (PstC and PstA) and a solute-binding protein (PstS).

Its subcellular location is the cell membrane. It carries out the reaction phosphate(out) + ATP + H2O = ADP + 2 phosphate(in) + H(+). Functionally, part of the ABC transporter complex PstSACB involved in phosphate import. Responsible for energy coupling to the transport system. The polypeptide is Phosphate import ATP-binding protein PstB 2 (Lactobacillus johnsonii (strain CNCM I-12250 / La1 / NCC 533)).